The following is a 975-amino-acid chain: Glycine dehydrogenase (decarboxylating) (975 aa).

K723 is subject to N6-(pyridoxal phosphate)lysine.

It belongs to the GcvP family. In terms of assembly, the glycine cleavage system is composed of four proteins: P, T, L and H. The cofactor is pyridoxal 5'-phosphate.

It carries out the reaction N(6)-[(R)-lipoyl]-L-lysyl-[glycine-cleavage complex H protein] + glycine + H(+) = N(6)-[(R)-S(8)-aminomethyldihydrolipoyl]-L-lysyl-[glycine-cleavage complex H protein] + CO2. The glycine cleavage system catalyzes the degradation of glycine. The P protein binds the alpha-amino group of glycine through its pyridoxal phosphate cofactor; CO(2) is released and the remaining methylamine moiety is then transferred to the lipoamide cofactor of the H protein. The protein is Glycine dehydrogenase (decarboxylating) of Burkholderia pseudomallei (strain 668).